The chain runs to 241 residues: Aspartate/glutamate leucyltransferase (241 aa).

The protein belongs to the R-transferase family. Bpt subfamily.

The protein resides in the cytoplasm. The enzyme catalyses N-terminal L-glutamyl-[protein] + L-leucyl-tRNA(Leu) = N-terminal L-leucyl-L-glutamyl-[protein] + tRNA(Leu) + H(+). It catalyses the reaction N-terminal L-aspartyl-[protein] + L-leucyl-tRNA(Leu) = N-terminal L-leucyl-L-aspartyl-[protein] + tRNA(Leu) + H(+). Functionally, functions in the N-end rule pathway of protein degradation where it conjugates Leu from its aminoacyl-tRNA to the N-termini of proteins containing an N-terminal aspartate or glutamate. The chain is Aspartate/glutamate leucyltransferase from Parvibaculum lavamentivorans (strain DS-1 / DSM 13023 / NCIMB 13966).